The chain runs to 453 residues: Ribulose bisphosphate carboxylase large chain (453 aa).

The propeptide occupies 1–2 (MS). An N-acetylproline modification is found at P3. An N6,N6,N6-trimethyllysine modification is found at K14. The substrate site is built by N123 and T173. K175 functions as the Proton acceptor in the catalytic mechanism. Residue K177 coordinates substrate. Residues K201, D203, and E204 each contribute to the Mg(2+) site. Position 201 is an N6-carboxylysine (K201). The active-site Proton acceptor is H294. 3 residues coordinate substrate: R295, H327, and S379.

The protein belongs to the RuBisCO large chain family. Type I subfamily. As to quaternary structure, heterohexadecamer of 8 large chains and 8 small chains; disulfide-linked. The disulfide link is formed within the large subunit homodimers. The cofactor is Mg(2+). The disulfide bond which can form in the large chain dimeric partners within the hexadecamer appears to be associated with oxidative stress and protein turnover.

The protein localises to the plastid. The protein resides in the chloroplast. It catalyses the reaction 2 (2R)-3-phosphoglycerate + 2 H(+) = D-ribulose 1,5-bisphosphate + CO2 + H2O. The enzyme catalyses D-ribulose 1,5-bisphosphate + O2 = 2-phosphoglycolate + (2R)-3-phosphoglycerate + 2 H(+). RuBisCO catalyzes two reactions: the carboxylation of D-ribulose 1,5-bisphosphate, the primary event in carbon dioxide fixation, as well as the oxidative fragmentation of the pentose substrate in the photorespiration process. Both reactions occur simultaneously and in competition at the same active site. The chain is Ribulose bisphosphate carboxylase large chain from Galium lucidum.